Here is a 1244-residue protein sequence, read N- to C-terminus: ATP-dependent helicase/nuclease subunit A (1244 aa).

The UvrD-like helicase ATP-binding domain maps to 4–475; it reads KKWTAEQLAA…IGLSKNFRSR (472 aa). 25 to 32 contacts ATP; that stretch reads AAAGAGKT. Positions 515 to 816 constitute a UvrD-like helicase C-terminal domain; that stretch reads EDVKTATGPV…RIMSIHKSKG (302 aa). A disordered region spans residues 538–559; that stretch reads EQNTDSAEEKLTDGEEQEDLDS.

The protein belongs to the helicase family. AddA subfamily. In terms of assembly, heterodimer of AddA and AddB/RexB. Mg(2+) is required as a cofactor.

It catalyses the reaction Couples ATP hydrolysis with the unwinding of duplex DNA by translocating in the 3'-5' direction.. It carries out the reaction ATP + H2O = ADP + phosphate + H(+). The heterodimer acts as both an ATP-dependent DNA helicase and an ATP-dependent, dual-direction single-stranded exonuclease. Recognizes the chi site generating a DNA molecule suitable for the initiation of homologous recombination. The AddA nuclease domain is required for chi fragment generation; this subunit has the helicase and 3' -&gt; 5' nuclease activities. The sequence is that of ATP-dependent helicase/nuclease subunit A from Desulforamulus reducens (strain ATCC BAA-1160 / DSM 100696 / MI-1) (Desulfotomaculum reducens).